Here is a 166-residue protein sequence, read N- to C-terminus: Lutropin subunit beta (166 aa).

An N-terminal signal peptide occupies residues methionine 1–glycine 21. 6 disulfide bridges follow: cysteine 56/cysteine 104, cysteine 70/cysteine 119, cysteine 73/cysteine 157, cysteine 81/cysteine 135, cysteine 85/cysteine 137, and cysteine 140/cysteine 147. Asparagine 60 is a glycosylation site (N-linked (GlcNAc...) asparagine).

The protein belongs to the glycoprotein hormones subunit beta family. As to quaternary structure, heterodimer of a common alpha chain and a unique beta chain which confers biological specificity to thyrotropin, lutropin, follitropin and gonadotropin.

It is found in the secreted. In terms of biological role, promotes spermatogenesis and ovulation by stimulating the testes and ovaries to synthesize steroids. The sequence is that of Lutropin subunit beta (LHB) from Coturnix japonica (Japanese quail).